The following is a 347-amino-acid chain: Haptoglobin (347 aa).

A signal peptide spans 1-18 (MSDLGAVVALLLWGQLFA). In terms of domain architecture, Sushi spans 31–88 (DGCPKPPMIANGYVEHLVRYQCKNYYRLRTEGDGVYTLNNEKQWTNKAVGDKLPECEA). 2 disulfides stabilise this stretch: Cys52-Cys86 and Cys90-Cys207. Residues 103–347 (ILGGHLDAKG…DWVQKTIAEN (245 aa)) are serine protease. N-linked (GlcNAc...) asparagine glycosylation is found at Asn125, Asn148, Asn152, Asn182, and Asn232. Intrachain disulfides connect Cys250–Cys281 and Cys292–Cys322. The interaction with CD163 stretch occupies residues 259-264 (VPEKKT).

The protein belongs to the peptidase S1 family. As to quaternary structure, tetramer of two alpha and two beta chains; disulfide-linked. The hemoglobin/haptoglobin complex is composed of a haptoglobin dimer bound to two hemoglobin alpha-beta dimers. Interacts with CD163. Interacts with ERGIC3. As to expression, expressed by the liver and secreted in plasma.

It is found in the secreted. In terms of biological role, as a result of hemolysis, hemoglobin is found to accumulate in the kidney and is secreted in the urine. Haptoglobin captures, and combines with free plasma hemoglobin to allow hepatic recycling of heme iron and to prevent kidney damage. Haptoglobin also acts as an antioxidant, has antibacterial activity and plays a role in modulating many aspects of the acute phase response. Hemoglobin/haptoglobin complexes are rapidly cleared by the macrophage CD163 scavenger receptor expressed on the surface of liver Kupfer cells through an endocytic lysosomal degradation pathway. The chain is Haptoglobin (HP) from Papio hamadryas (Hamadryas baboon).